Consider the following 95-residue polypeptide: Large ribosomal subunit protein uL23c (95 aa).

It belongs to the universal ribosomal protein uL23 family. As to quaternary structure, part of the 50S ribosomal subunit.

It localises to the plastid. The protein localises to the chloroplast. Its function is as follows. Binds to 23S rRNA. The sequence is that of Large ribosomal subunit protein uL23c (rpl23) from Guillardia theta (Cryptophyte).